A 495-amino-acid polypeptide reads, in one-letter code: GTPase Der (495 aa).

EngA-type G domains are found at residues 3 to 166 (PVIA…MDAE) and 208 to 381 (IKLA…DCST). GTP-binding positions include 9-16 (GRPNVGKS), 56-60 (DTGGI), 118-121 (NKTD), 214-221 (GRPNVGKS), 261-265 (DTAGV), and 326-329 (NKWD). One can recognise a KH-like domain in the interval 382–466 (KRVGTSLLTR…PIRIQFKEGE (85 aa)).

It belongs to the TRAFAC class TrmE-Era-EngA-EngB-Septin-like GTPase superfamily. EngA (Der) GTPase family. As to quaternary structure, associates with the 50S ribosomal subunit.

Functionally, GTPase that plays an essential role in the late steps of ribosome biogenesis. The chain is GTPase Der from Yersinia pseudotuberculosis serotype O:3 (strain YPIII).